Here is a 390-residue protein sequence, read N- to C-terminus: 3-ketoacyl-CoA thiolase (390 aa).

The Acyl-thioester intermediate role is filled by cysteine 95. Active-site proton acceptor residues include histidine 346 and cysteine 376.

The protein belongs to the thiolase-like superfamily. Thiolase family. Heterotetramer of two alpha chains (FadB) and two beta chains (FadA).

Its subcellular location is the cytoplasm. It carries out the reaction an acyl-CoA + acetyl-CoA = a 3-oxoacyl-CoA + CoA. Its pathway is lipid metabolism; fatty acid beta-oxidation. In terms of biological role, catalyzes the final step of fatty acid oxidation in which acetyl-CoA is released and the CoA ester of a fatty acid two carbons shorter is formed. This Acinetobacter baumannii (strain ATCC 17978 / DSM 105126 / CIP 53.77 / LMG 1025 / NCDC KC755 / 5377) protein is 3-ketoacyl-CoA thiolase.